The primary structure comprises 324 residues: UPF0158 protein CPn_0518/CP_0235/CPj0518/CpB0539 (324 aa).

The protein belongs to the UPF0158 family.

This is UPF0158 protein CPn_0518/CP_0235/CPj0518/CpB0539 from Chlamydia pneumoniae (Chlamydophila pneumoniae).